The primary structure comprises 323 residues: Lipoyl synthase (323 aa).

The tract at residues Met-1–Glu-27 is disordered. [4Fe-4S] cluster is bound by residues Cys-61, Cys-66, Cys-72, Cys-87, Cys-91, Cys-94, and Ser-300. A Radical SAM core domain is found at Trp-73–Leu-289.

Belongs to the radical SAM superfamily. Lipoyl synthase family. The cofactor is [4Fe-4S] cluster.

Its subcellular location is the cytoplasm. It carries out the reaction [[Fe-S] cluster scaffold protein carrying a second [4Fe-4S](2+) cluster] + N(6)-octanoyl-L-lysyl-[protein] + 2 oxidized [2Fe-2S]-[ferredoxin] + 2 S-adenosyl-L-methionine + 4 H(+) = [[Fe-S] cluster scaffold protein] + N(6)-[(R)-dihydrolipoyl]-L-lysyl-[protein] + 4 Fe(3+) + 2 hydrogen sulfide + 2 5'-deoxyadenosine + 2 L-methionine + 2 reduced [2Fe-2S]-[ferredoxin]. Its pathway is protein modification; protein lipoylation via endogenous pathway; protein N(6)-(lipoyl)lysine from octanoyl-[acyl-carrier-protein]: step 2/2. In terms of biological role, catalyzes the radical-mediated insertion of two sulfur atoms into the C-6 and C-8 positions of the octanoyl moiety bound to the lipoyl domains of lipoate-dependent enzymes, thereby converting the octanoylated domains into lipoylated derivatives. In Agrobacterium fabrum (strain C58 / ATCC 33970) (Agrobacterium tumefaciens (strain C58)), this protein is Lipoyl synthase.